A 76-amino-acid polypeptide reads, in one-letter code: Conotoxin Lt6.1 (76 aa).

Residues 1–22 (MKLTCVLIIAVLFLMDNQLITA) form the signal peptide. The propeptide occupies 23–48 (DYPRDEQVYRAVRLRDAMQKSKGSGS). 3 disulfides stabilise this stretch: Cys-49/Cys-62, Cys-56/Cys-67, and Cys-61/Cys-75.

The protein belongs to the conotoxin O1 superfamily. Expressed by the venom duct.

The protein localises to the secreted. The protein is Conotoxin Lt6.1 of Conus litteratus (Lettered cone).